The primary structure comprises 118 residues: Large ribosomal subunit protein bL20 (118 aa).

It belongs to the bacterial ribosomal protein bL20 family.

Functionally, binds directly to 23S ribosomal RNA and is necessary for the in vitro assembly process of the 50S ribosomal subunit. It is not involved in the protein synthesizing functions of that subunit. The sequence is that of Large ribosomal subunit protein bL20 from Kosmotoga olearia (strain ATCC BAA-1733 / DSM 21960 / TBF 19.5.1).